The following is a 346-amino-acid chain: Inositol 2-dehydrogenase/D-chiro-inositol 3-dehydrogenase (346 aa).

It belongs to the Gfo/Idh/MocA family. In terms of assembly, homotetramer.

It catalyses the reaction myo-inositol + NAD(+) = scyllo-inosose + NADH + H(+). It carries out the reaction 1D-chiro-inositol + NAD(+) = scyllo-inosine + NADH + H(+). It functions in the pathway polyol metabolism; myo-inositol degradation into acetyl-CoA; acetyl-CoA from myo-inositol: step 1/7. In terms of biological role, involved in the oxidation of myo-inositol (MI) and D-chiro-inositol (DCI) to 2-keto-myo-inositol (2KMI or 2-inosose) and 1-keto-D-chiro-inositol (1KDCI), respectively. In Lacticaseibacillus casei (Lactobacillus casei), this protein is Inositol 2-dehydrogenase/D-chiro-inositol 3-dehydrogenase.